A 391-amino-acid chain; its full sequence is MVKIGVLLMNLGGPERITDVGPFLYNLFSDPEIIRTPFPVFQKPLAWLISTLRSTTSQQAYLSIGGGSPIRRITEQQARELQSKLREKGFNATTYIAMRYWHPFTESAIADMKADGIDQVVVIPLYPHFSISTSGSSFRELKKLRDSDDEFKKVPMRCVRSWFSQSGYLKSMVELISEQISLCESPSKAHIFFTAHGVPKSYVEEAGDPYKQQIEDCSLLIINELEKCLGYSNPHTLSYQSRVGPVEWLKPYTEEVLADLGRSNVNDLVVVPISFVGEHIETLQEIDIEYKEIAEKAGIKNFRRVKALNTHPTFIEGLSDLVISCLEGPLVNIEEASQLPEKVKLYPQEKWQWGWNNSSEVWNGRVAMIIFLVLFIELISGSGPLHKLGIL.

Fe cation is bound by residues H196 and E281.

The protein belongs to the ferrochelatase family.

Its subcellular location is the cytoplasm. It carries out the reaction heme b + 2 H(+) = protoporphyrin IX + Fe(2+). The protein operates within porphyrin-containing compound metabolism; protoheme biosynthesis; protoheme from protoporphyrin-IX: step 1/1. In terms of biological role, catalyzes the ferrous insertion into protoporphyrin IX. The protein is Ferrochelatase of Prochlorococcus marinus (strain MIT 9301).